Here is a 142-residue protein sequence, read N- to C-terminus: Large ribosomal subunit protein uL13 (142 aa).

This sequence belongs to the universal ribosomal protein uL13 family. Part of the 50S ribosomal subunit.

Its function is as follows. This protein is one of the early assembly proteins of the 50S ribosomal subunit, although it is not seen to bind rRNA by itself. It is important during the early stages of 50S assembly. The sequence is that of Large ribosomal subunit protein uL13 from Maridesulfovibrio salexigens (strain ATCC 14822 / DSM 2638 / NCIMB 8403 / VKM B-1763) (Desulfovibrio salexigens).